The following is a 454-amino-acid chain: 5-hydroxytryptamine receptor 3D (454 aa).

The N-terminal stretch at 1–24 (MQKHSPGPPALALLSQSLLTTGNG) is a signal peptide. Residues 25–232 (DTLIINCPGF…IRRRCRPSPY (208 aa)) are Extracellular-facing. Asn66 is a glycosylation site (N-linked (GlcNAc...) asparagine). A helical membrane pass occupies residues 233-253 (VVNFLVPSGILIAIDALSFYL). The Cytoplasmic portion of the chain corresponds to 254-264 (PLESGNCAPFK). A helical transmembrane segment spans residues 265–285 (MTVLLGYSVFLLMMNDLLPAT). Residues 286–306 (STSSHASLVAPLALMQTPLPA) lie on the Extracellular side of the membrane. The helical transmembrane segment at 307–327 (GVYFALCLSLMVGSLLETIFI) threads the bilayer. Over 328–431 (THLLHVATTQ…WVQFSHAMDA (104 aa)) the chain is Cytoplasmic. The segment at 363–410 (PQKGNKGPGLTPTHLPGVKEPEVSAGQMPGPGEAELTGGSEWTRAQRE) is disordered. Residues 399-430 (TGGSEWTRAQREHEAQKQHSVELWVQFSHAMD) form an HA-stretch; determines single-channel conductance in 5-HT3 receptors region. Residues 432–452 (LLFRLYLLFMASSIITVICLW) form a helical membrane-spanning segment. Residues 453-454 (NT) lie on the Extracellular side of the membrane.

The protein belongs to the ligand-gated ion channel (TC 1.A.9) family. 5-hydroxytryptamine receptor (TC 1.A.9.2) subfamily. HTR3D sub-subfamily. Forms homopentameric as well as heteropentameric serotonin-activated cation-selective channel complexes with HTR3A. The homomeric complex is not functional. Heteropentameric complexes display properties which resemble that of neuronal serotonin-activated channels in vivo. Expressed in liver, as well as fetal and adult colon and kidney.

The protein localises to the postsynaptic cell membrane. The protein resides in the cell membrane. It catalyses the reaction Na(+)(in) = Na(+)(out). It carries out the reaction K(+)(in) = K(+)(out). The catalysed reaction is Ca(2+)(in) = Ca(2+)(out). Functionally, forms serotonin (5-hydroxytryptamine/5-HT3)-activated cation-selective channel complexes, which when activated cause fast, depolarizing responses in neurons. In Homo sapiens (Human), this protein is 5-hydroxytryptamine receptor 3D.